Here is an 830-residue protein sequence, read N- to C-terminus: Kinesin-like protein KIN-14B (830 aa).

Residues 56–97 are a coiled coil; sequence ENISDDNTESEAKVQKIQDELVSLNAQLKQITLQRREALNNY. In terms of domain architecture, Kinesin motor spans 103–425; sequence NIRVFCRIRP…LGFATRVRSI (323 aa). 182–189 serves as a coordination point for ATP; it reads GQTGSGKT. The stretch at 434–476 forms a coiled coil; it reads EMKARKETLLIDLGQKVNDLEHECEDIRRKIKNLEESMEHLTG.

Belongs to the TRAFAC class myosin-kinesin ATPase superfamily. Kinesin family. KIN-14 subfamily.

The protein is Kinesin-like protein KIN-14B of Oryza sativa subsp. japonica (Rice).